We begin with the raw amino-acid sequence, 214 residues long: DELTA-actitoxin-Aeq1a (214 aa).

A signal peptide spans 1–19; the sequence is MSRLIIVFIVVTMICSATA. Residues 20 to 35 constitute a propeptide that is removed on maturation; sequence LPSKKIIDEDEEDEKR. Residues 38 to 47 are plays an important role in the hemolytic activity; it reads DVAGAVIDGA. The tract at residues 46 to 65 is N-terminal region; it reads GASLSFDILKTVLEALGNVK. Phosphocholine-binding residues include serine 89, valine 122, serine 140, proline 142, tyrosine 168, tyrosine 172, and tyrosine 173. Positions 140-155 are trp-rich region, which is important for the binding to lipid membrane; sequence SVPYDYNWYSNWWNVR. The short motif at 179–181 is the Cell attachment site, crucial for protein stability element; sequence RGD.

It belongs to the actinoporin family. Sea anemone subfamily. As to quaternary structure, octamer or nonamer in membranes. Monomer in the soluble state.

The protein resides in the secreted. It localises to the nematocyst. Its subcellular location is the target cell membrane. Its function is as follows. Pore-forming protein that forms cations-selective hydrophilic pores of around 1 nm and causes cardiac stimulation and cytolysis. Pore formation is a multi-step process that involves specific recognition of membrane sphingomyelin (but neither cholesterol nor phosphatidylcholine) using aromatic rich region and adjacent phosphocholine (POC) binding site, firm binding to the membrane (mainly driven by hydrophobic interactions) accompanied by the transfer of the N-terminal region to the lipid-water interface and finally pore formation after oligomerization of monomers. Cytolytic effects include red blood cells hemolysis, platelet aggregation and lysis, cytotoxic and cytostatic effects on fibroblasts. Lethality in mammals has been ascribed to severe vasospasm of coronary vessels, cardiac arrhythmia, and inotropic effects. This Actinia equina (Beadlet anemone) protein is DELTA-actitoxin-Aeq1a.